We begin with the raw amino-acid sequence, 279 residues long: Ribosomal RNA small subunit methyltransferase J (279 aa).

S-adenosyl-L-methionine-binding positions include 138 to 139 and Asp-194; that span reads ER.

The protein belongs to the methyltransferase superfamily. RsmJ family.

It is found in the cytoplasm. It carries out the reaction guanosine(1516) in 16S rRNA + S-adenosyl-L-methionine = N(2)-methylguanosine(1516) in 16S rRNA + S-adenosyl-L-homocysteine + H(+). In terms of biological role, specifically methylates the guanosine in position 1516 of 16S rRNA. In Acinetobacter baumannii (strain ACICU), this protein is Ribosomal RNA small subunit methyltransferase J.